A 363-amino-acid polypeptide reads, in one-letter code: Mitogen-activated protein kinase 12 (363 aa).

Residues 25 to 309 (YKDLKQVGTG…AAEALAFPFF (285 aa)) form the Protein kinase domain. ATP is bound by residues 31 to 39 (VGTGAYGTV) and lysine 54. Aspartate 151 acts as the Proton acceptor in catalysis. Phosphothreonine is present on threonine 181. A TXY motif is present at residues 181–183 (TGY). Tyrosine 183 bears the Phosphotyrosine mark.

It belongs to the protein kinase superfamily. CMGC Ser/Thr protein kinase family. MAP kinase subfamily. Mg(2+) is required as a cofactor. Post-translationally, dually phosphorylated on Thr-181 and Tyr-183, which activates the enzyme.

It localises to the cytoplasm. The catalysed reaction is L-seryl-[protein] + ATP = O-phospho-L-seryl-[protein] + ADP + H(+). It catalyses the reaction L-threonyl-[protein] + ATP = O-phospho-L-threonyl-[protein] + ADP + H(+). Activated by threonine and tyrosine phosphorylation. Functionally, serine/threonine kinase which acts as an essential component of the MAP kinase signal transduction pathway. MAPK12 is one of the four p38 MAPKs which play an important role in the cascades of cellular responses evoked by extracellular stimuli such as pro-inflammatory cytokines or physical stress leading to direct activation of transcription factors. Accordingly, p38 MAPKs phosphorylate a broad range of proteins and it has been estimated that they may have approximately 200 to 300 substrates each. Some of the targets are downstream kinases such as MAPKAPK2, which are activated through phosphorylation and further phosphorylate additional targets. The chain is Mitogen-activated protein kinase 12 (mapk12) from Danio rerio (Zebrafish).